The chain runs to 115 residues: Basic leucine zipper transcriptional factor ATF-like (115 aa).

The interval M1–E60 is disordered. Residues S13–Q22 show a composition bias toward low complexity. The region spanning D27–H90 is the bZIP domain. The segment at K29–K51 is basic motif. Positions R47–E60 are enriched in basic and acidic residues. The leucine-zipper stretch occupies residues L55–L83.

Belongs to the bZIP family.

Its subcellular location is the nucleus. It is found in the cytoplasm. Its function is as follows. AP-1 family transcription factor that controls the differentiation of lineage-specific cells in the immune system: specifically mediates the differentiation of T-helper 17 cells (Th17), follicular T-helper cells (TfH), CD8(+) dendritic cells and class-switch recombination (CSR) in B-cells. This Xenopus laevis (African clawed frog) protein is Basic leucine zipper transcriptional factor ATF-like (batf).